A 105-amino-acid chain; its full sequence is uncharacterized protein (105 aa).

Transmembrane regions (helical) follow at residues 56–76 and 85–105; these read ALIW…VLII and INLN…GVFY.

The protein resides in the membrane. This is an uncharacterized protein from Aedes vexans (Inland floodwater mosquito).